We begin with the raw amino-acid sequence, 307 residues long: tRNA dimethylallyltransferase (307 aa).

9-16 (GPTAVGKT) serves as a coordination point for ATP. 11–16 (TAVGKT) provides a ligand contact to substrate. The interval 34–37 (DSMQ) is interaction with substrate tRNA.

Belongs to the IPP transferase family. In terms of assembly, monomer. Requires Mg(2+) as cofactor.

It carries out the reaction adenosine(37) in tRNA + dimethylallyl diphosphate = N(6)-dimethylallyladenosine(37) in tRNA + diphosphate. Catalyzes the transfer of a dimethylallyl group onto the adenine at position 37 in tRNAs that read codons beginning with uridine, leading to the formation of N6-(dimethylallyl)adenosine (i(6)A). This Limosilactobacillus fermentum (strain NBRC 3956 / LMG 18251) (Lactobacillus fermentum) protein is tRNA dimethylallyltransferase.